A 240-amino-acid chain; its full sequence is Proteasome subunit alpha (240 aa).

It belongs to the peptidase T1A family. In terms of assembly, the 20S proteasome core is composed of 14 alpha and 14 beta subunits that assemble into four stacked heptameric rings, resulting in a barrel-shaped structure. The two inner rings, each composed of seven catalytic beta subunits, are sandwiched by two outer rings, each composed of seven alpha subunits. The catalytic chamber with the active sites is on the inside of the barrel. Has a gated structure, the ends of the cylinder being occluded by the N-termini of the alpha-subunits. Is capped at one or both ends by the proteasome regulatory ATPase, PAN.

The protein localises to the cytoplasm. The formation of the proteasomal ATPase PAN-20S proteasome complex, via the docking of the C-termini of PAN into the intersubunit pockets in the alpha-rings, triggers opening of the gate for substrate entry. Interconversion between the open-gate and close-gate conformations leads to a dynamic regulation of the 20S proteasome proteolysis activity. In terms of biological role, component of the proteasome core, a large protease complex with broad specificity involved in protein degradation. This chain is Proteasome subunit alpha, found in Metallosphaera sedula (strain ATCC 51363 / DSM 5348 / JCM 9185 / NBRC 15509 / TH2).